We begin with the raw amino-acid sequence, 166 residues long: NADH-ubiquinone oxidoreductase chain 6 (166 aa).

6 consecutive transmembrane segments (helical) span residues F4–A24, Q27–G47, F50–C70, V82–L102, L109–F129, and W135–L155.

It belongs to the complex I subunit 6 family.

Its subcellular location is the mitochondrion membrane. The catalysed reaction is a ubiquinone + NADH + 5 H(+)(in) = a ubiquinol + NAD(+) + 4 H(+)(out). In terms of biological role, core subunit of the mitochondrial membrane respiratory chain NADH dehydrogenase (Complex I) that is believed to belong to the minimal assembly required for catalysis. Complex I functions in the transfer of electrons from NADH to the respiratory chain. The immediate electron acceptor for the enzyme is believed to be ubiquinone. This chain is NADH-ubiquinone oxidoreductase chain 6 (MT-ND6), found in Lycodon semicarinatus (Ryukyu odd-tooth snake).